Reading from the N-terminus, the 380-residue chain is Tetratricopeptide repeat protein 19, mitochondrial (380 aa).

Residues 1-70 (MFRLLSWSLG…AALAWFSRPA (70 aa)) constitute a mitochondrion transit peptide. TPR repeat units follow at residues 136 to 169 (TYTY…LLGG), 179 to 212 (IEIS…LEEK), 237 to 270 (GMCL…SEEI), 279 to 312 (IVLM…ARQI), and 318 to 351 (HMVL…AKLK).

This sequence belongs to the TTC19 family. Binds to the mature mitochondrial complex III dimer, after the incorporation of the Rieske protein UQCRFS1. Interacts with UQCRC1 and UQCRFS1. Interacts with ZFYVE26 and CHMP4B. Post-translationally, proteolytically cleaved by PARL.

Its subcellular location is the mitochondrion inner membrane. In terms of biological role, required for the preservation of the structural and functional integrity of mitochondrial respiratory complex III by allowing the physiological turnover of the Rieske protein UQCRFS1. Involved in the clearance of UQCRFS1 N-terminal fragments, which are produced upon incorporation of UQCRFS1 into the complex III and whose presence is detrimental for its catalytic activity. The protein is Tetratricopeptide repeat protein 19, mitochondrial (TTC19) of Homo sapiens (Human).